The sequence spans 1043 residues: Calcium-transporting ATPase 1, plasma membrane-type (1043 aa).

The Cytoplasmic portion of the chain corresponds to 1-178 (MSFIRKKSME…FLWDASQDMT (178 aa)). 2 consecutive transmembrane segments (helical) span residues 179–199 (LLLLAFCAAVSVAIGLATEGW) and 202–222 (GMYDGVGIMLTILLVVMITAA). Topologically, residues 223 to 258 (SDYKQSLQFRDLDKEKKKIDVQVTRDGYRQKVSIYD) are cytoplasmic. Transmembrane regions (helical) follow at residues 259 to 279 (IVVGDIVHLSIGDQVPADGLF) and 356 to 376 (VATIIGKIGLAFAVLTFTVLM). Topologically, residues 377–395 (ARFLLGKAGAPGGLLRWRM) are cytoplasmic. The helical transmembrane segment at 396–416 (VDALAVLNFFAVAVTIIVVAV) threads the bilayer. Asp460 functions as the 4-aspartylphosphate intermediate in the catalytic mechanism. Residues Asp761 and Asp765 each coordinate Mg(2+). Residues 824–844 (LTVNVVALMVNFISASFTGSA) form a helical membrane-spanning segment. Residue Pro845 is a topological domain, cytoplasmic. 2 helical membrane-spanning segments follow: residues 846–866 (LTIVQLLWVNLIMDTLGALAL) and 891–911 (VMWRNIVGQSIYQLVVLGVLL). Over 912-955 (LRGKSLLQINGPQADSLLNTFVFNTFVFCQVFNEVNSREMEKIN) the chain is Cytoplasmic. Helical transmembrane passes span 956–976 (VFSGIFSSWIFSAVVGVTAGF) and 998–1018 (WLTSVLIGSVGLVIGAILKCI). The Cytoplasmic portion of the chain corresponds to 1019–1043 (PVESGSDASDRHDGYRPIPTGPSAV). Residues 1023-1043 (GSDASDRHDGYRPIPTGPSAV) form a disordered region.

It belongs to the cation transport ATPase (P-type) (TC 3.A.3) family. Type IIB subfamily.

The protein localises to the membrane. It carries out the reaction Ca(2+)(in) + ATP + H2O = Ca(2+)(out) + ADP + phosphate + H(+). With respect to regulation, activated by calmodulin. This magnesium-dependent enzyme catalyzes the hydrolysis of ATP coupled with the translocation of calcium from the cytosol out of the cell, into the endoplasmic reticulum, or into organelles. The protein is Calcium-transporting ATPase 1, plasma membrane-type of Oryza sativa subsp. japonica (Rice).